The sequence spans 113 residues: U11-theraphotoxin-Hhn1a (113 aa).

The first 21 residues, 1–21 (MNTVRVAFLLVFVLAVSLGQA), serve as a signal peptide directing secretion. Positions 22 to 74 (DKDENRMEMQEKTEQGKSYLDFAENLLLQKLEELEAKLLEEDSEESRNSRQKR) are excised as a propeptide. A disordered region spans residues 61–83 (EEDSEESRNSRQKRCIGEGVPCD). Intrachain disulfides connect Cys75/Cys90, Cys82/Cys95, and Cys89/Cys110.

Belongs to the neurotoxin 14 (magi-1) family. 01 (HNTX-16) subfamily. In terms of tissue distribution, expressed by the venom gland.

The protein localises to the secreted. In terms of biological role, probable ion channel inhibitor. The chain is U11-theraphotoxin-Hhn1a from Cyriopagopus hainanus (Chinese bird spider).